We begin with the raw amino-acid sequence, 372 residues long: NAD(P)H-quinone oxidoreductase subunit 1 (372 aa).

8 consecutive transmembrane segments (helical) span residues 27-47 (AIWM…GVLV), 97-117 (WLFL…YLIV), 130-150 (VGIF…LMAG), 176-196 (LALS…IDIV), 204-224 (ILGW…IAAL), 254-274 (FALF…VFAV), 308-328 (SLGI…AILL), and 351-371 (VSLV…FAFG).

This sequence belongs to the complex I subunit 1 family. As to quaternary structure, NDH-1 is composed of at least 11 different subunits.

Its subcellular location is the cellular thylakoid membrane. It catalyses the reaction a plastoquinone + NADH + (n+1) H(+)(in) = a plastoquinol + NAD(+) + n H(+)(out). It carries out the reaction a plastoquinone + NADPH + (n+1) H(+)(in) = a plastoquinol + NADP(+) + n H(+)(out). Functionally, NDH-1 shuttles electrons from an unknown electron donor, via FMN and iron-sulfur (Fe-S) centers, to quinones in the respiratory and/or the photosynthetic chain. The immediate electron acceptor for the enzyme in this species is believed to be plastoquinone. Couples the redox reaction to proton translocation, and thus conserves the redox energy in a proton gradient. The sequence is that of NAD(P)H-quinone oxidoreductase subunit 1 from Microcystis aeruginosa (strain NIES-843 / IAM M-2473).